A 113-amino-acid chain; its full sequence is Urocortin-2 (113 aa).

A signal peptide spans 1 to 23 (MMTRWALVVFVVLMLDRILFVPG). The propeptide occupies 24-71 (TPIPTFQLLPQNSLETTPSSVTSESSSGTTTGPSASWSNSKASPYLDT). Low complexity predominate over residues 37 to 61 (LETTPSSVTSESSSGTTTGPSASWS). Residues 37–64 (LETTPSSVTSESSSGTTTGPSASWSNSK) are disordered. A Valine amide; partial modification is found at Val-110.

This sequence belongs to the sauvagine/corticotropin-releasing factor/urotensin I family. In terms of assembly, binds with high affinity to CRF receptors 2-alpha and 2-beta. Glycosylated.

It is found in the secreted. Its function is as follows. Suppresses food intake, delays gastric emptying and decreases heat-induced edema. Might represent an endogenous ligand for maintaining homeostasis after stress. The chain is Urocortin-2 (Ucn2) from Mus musculus (Mouse).